Reading from the N-terminus, the 571-residue chain is Urease subunit alpha (571 aa).

The 443-residue stretch at 129–571 (GGIDSHIHFI…LPMAQRYFLF (443 aa)) folds into the Urease domain. The Ni(2+) site is built by H134, H136, and K217. K217 bears the N6-carboxylysine mark. H219 provides a ligand contact to substrate. Residues H246 and H272 each contribute to the Ni(2+) site. H320 (proton donor) is an active-site residue. D360 serves as a coordination point for Ni(2+).

Belongs to the metallo-dependent hydrolases superfamily. Urease alpha subunit family. As to quaternary structure, heterotrimer of UreA (gamma), UreB (beta) and UreC (alpha) subunits. Three heterotrimers associate to form the active enzyme. Requires Ni cation as cofactor. In terms of processing, carboxylation allows a single lysine to coordinate two nickel ions.

The protein localises to the cytoplasm. The catalysed reaction is urea + 2 H2O + H(+) = hydrogencarbonate + 2 NH4(+). Its pathway is nitrogen metabolism; urea degradation; CO(2) and NH(3) from urea (urease route): step 1/1. The sequence is that of Urease subunit alpha from Cupriavidus necator (strain ATCC 17699 / DSM 428 / KCTC 22496 / NCIMB 10442 / H16 / Stanier 337) (Ralstonia eutropha).